Consider the following 675-residue polypeptide: Sodium/myo-inositol cotransporter 2 (675 aa).

Topologically, residues 1–27 (MESGTSSPQPPQLDPLDAFPQKGLEPG) are extracellular. Residues 28-48 (DIAVLVLYFLFVLAVGLWSTV) form a helical membrane-spanning segment. The Cytoplasmic segment spans residues 49–65 (KTKRDTVKGYFLAGGDM). The helical transmembrane segment at 66–88 (VWWPVGASLFASNVGSGHFIGLA) threads the bilayer. Residues 89 to 102 (GSGAATGISVSAYE) are Extracellular-facing. A helical membrane pass occupies residues 103–123 (LNGLFSVLMLAWIFLPIYIAG). At 124 to 135 (QVTTMPEYLRKR) the chain is on the cytoplasmic side. The chain crosses the membrane as a helical span at residues 136 to 156 (FGGIRIPIILAVLYLFIYIFT). At 157-180 (KISVDMYAGAIFIQQSLHLDLYLA) the chain is on the extracellular side. A helical membrane pass occupies residues 181–201 (IVGLLAITAVYTVAGGLAAVI). Topologically, residues 202–208 (YTDALQT) are cytoplasmic. Residues 209–229 (LIMLIGALTLMGYSFAAVGGM) form a helical membrane-spanning segment. Residues 230-272 (EGLKEKYFLALASNRSENSSCGLPREDAFHIFRDPLTSDLPWP) lie on the Extracellular side of the membrane. A helical membrane pass occupies residues 273-293 (GVLFGMSIPSLWYWCTDQVIV). Over 294–308 (QRTLAAKNLSHAKGG) the chain is Cytoplasmic. Residues 309–329 (ALMAAYLKVLPLFIMVFPGMV) traverse the membrane as a helical segment. Residues 330-375 (SRILFPDQVACADPEICQKICSNPSGCSDIAYPKLVLELLPTGLRG) are Extracellular-facing. A helical transmembrane segment spans residues 376–396 (LMMAVMVAALMSSLTSIFNSA). The Cytoplasmic segment spans residues 397–418 (STIFTMDLWNHLRPRASEKELM). The chain crosses the membrane as a helical span at residues 419–439 (IVGRVFVLLLVLVSILWIPVV). At 440-446 (QASQGGQ) the chain is on the extracellular side. A helical membrane pass occupies residues 447 to 467 (LFIYIQSISSYLQPPVAVVFI). At 468–479 (MGCFWKRTNEKG) the chain is on the cytoplasmic side. A helical membrane pass occupies residues 480-500 (AFWGLISGLLLGLVRLVLDFI). The Extracellular segment spans residues 501–521 (YVQPRCDQPDERPVLVKSIHY). The chain crosses the membrane as a helical span at residues 522–542 (LYFSMILSTVTLITVSTVSWF). Residues 543-654 (TEPPSKEMVS…SLEENPLVKT (112 aa)) are Cytoplasmic-facing. The helical transmembrane segment at 655 to 675 (LLDVNLIFCVSCAIFIWGYFA) threads the bilayer.

The protein belongs to the sodium:solute symporter (SSF) (TC 2.A.21) family. Highest expression in heart, skeletal muscle, kidney, liver and placenta. Weaker expression in brain, colon, spleen, lung and peripheral blood leukocytes.

The protein localises to the membrane. It localises to the apical cell membrane. It carries out the reaction myo-inositol(out) + 2 Na(+)(out) = myo-inositol(in) + 2 Na(+)(in). It catalyses the reaction 1D-chiro-inositol(out) + 2 Na(+)(out) = 1D-chiro-inositol(in) + 2 Na(+)(in). The catalysed reaction is D-glucose(out) + 2 Na(+)(out) = D-glucose(in) + 2 Na(+)(in). The enzyme catalyses D-xylose(out) + 2 Na(+)(out) = D-xylose(in) + 2 Na(+)(in). Its activity is regulated as follows. MI transport activity inhibited by D-chiro-inositol (DCI), phlorizin (Pz) and sodium (Na(+)). Insulin increases D-chiro-inositol uptake. Involved in the sodium-dependent cotransport of myo-inositol (MI) with a Na(+):MI stoichiometry of 2:1. Exclusively responsible for apical MI transport and absorption in intestine. Can also transport D-chiro-inositol (DCI) but not L-fucose. Exhibits stereospecific cotransport of both D-glucose and D-xylose. May induce apoptosis through the TNF-alpha, PDCD1 pathway. May play a role in the regulation of MI concentration in serum, involving reabsorption in at least the proximal tubule of the kidney. In Homo sapiens (Human), this protein is Sodium/myo-inositol cotransporter 2.